The sequence spans 955 residues: Auxin response factor 11 (955 aa).

The TF-B3 DNA-binding region spans 143–245 (FCKNLTASDT…QLLLGVRRAT (103 aa)). Over residues 518–543 (ESKLNATSRDPRNTDSYTSRSTSEQN) the composition is skewed to polar residues. 2 disordered regions span residues 518-573 (ESKL…LSSA) and 609-646 (TQGN…KSVN). Over residues 551–560 (KTRRSKKGLP) the composition is skewed to basic residues. Residues 852–936 (RTYTKVQKQG…RCIRILSPSE (85 aa)) enclose the PB1 domain.

The protein belongs to the ARF family. In terms of assembly, homodimers and heterodimers.

The protein localises to the nucleus. Functionally, auxin response factors (ARFs) are transcriptional factors that bind specifically to the DNA sequence 5'-TGTCTC-3' found in the auxin-responsive promoter elements (AuxREs). The protein is Auxin response factor 11 (ARF11) of Oryza sativa subsp. indica (Rice).